The following is a 186-amino-acid chain: Peptidyl-tRNA hydrolase (186 aa).

TRNA is bound at residue tyrosine 14. The active-site Proton acceptor is the histidine 19. TRNA-binding residues include tyrosine 60 and asparagine 62.

This sequence belongs to the PTH family. Monomer.

It is found in the cytoplasm. It catalyses the reaction an N-acyl-L-alpha-aminoacyl-tRNA + H2O = an N-acyl-L-amino acid + a tRNA + H(+). Functionally, hydrolyzes ribosome-free peptidyl-tRNAs (with 1 or more amino acids incorporated), which drop off the ribosome during protein synthesis, or as a result of ribosome stalling. Its function is as follows. Catalyzes the release of premature peptidyl moieties from peptidyl-tRNA molecules trapped in stalled 50S ribosomal subunits, and thus maintains levels of free tRNAs and 50S ribosomes. The polypeptide is Peptidyl-tRNA hydrolase (Mycoplasmopsis pulmonis (strain UAB CTIP) (Mycoplasma pulmonis)).